The primary structure comprises 301 residues: Mitochondrial substrate carrier family protein X (301 aa).

Topologically, residues 1–23 are mitochondrial intermembrane; that stretch reads MVQQQQQQQQIKKNQVKPPLYSN. 3 Solcar repeats span residues 18–109, 117–199, and 208–296; these read PPLY…FRTR, IKLW…MKHN, and IGLP…QKSF. Residues 24-44 traverse the membrane as a helical segment; the sequence is LIAGAIAGVIGSSVVFPLDFV. Topologically, residues 45-75 are mitochondrial matrix; the sequence is KTRLQQQRVSIDGSKQYNGIIDCFKKVIKNE. A helical membrane pass occupies residues 76 to 97; sequence GGVRGLYRGLSSNLIGIIPEKA. Residues 98–122 lie on the Mitochondrial intermembrane side of the membrane; that stretch reads LKLAMNDYFRTRFQGDRSYIKLWEE. Residues 123 to 143 form a helical membrane-spanning segment; sequence VASGGLAGMCQVVATNPMELV. At 144–173 the chain is on the mitochondrial matrix side; the sequence is KIRMQVSGLSGKKASLKEVVSELGIKGLYK. The helical transmembrane segment at 174–194 threads the bilayer; that stretch reads GTASTLLRDVPFSMIYFSIYG. Topologically, residues 195–207 are mitochondrial intermembrane; that stretch reads RMKHNLTDQETGE. A helical membrane pass occupies residues 208–228; sequence IGLPKILLCGITAGSIAASVS. Residues 229–271 are Mitochondrial matrix-facing; sequence TPFDVIKTRIQVKPGPNDPHYKGIADCFRKTIQSEGPKALFKG. Residues 272–292 traverse the membrane as a helical segment; the sequence is VLPRVCIISPLFGITLVVYEI. Residues 293 to 301 lie on the Mitochondrial intermembrane side of the membrane; that stretch reads QKSFYASTH.

It belongs to the mitochondrial carrier (TC 2.A.29) family.

It localises to the mitochondrion inner membrane. Mitochondrial solute carriers shuttle metabolites, nucleotides, and cofactors through the mitochondrial inner membrane. This is Mitochondrial substrate carrier family protein X (mcfX) from Dictyostelium discoideum (Social amoeba).